Consider the following 154-residue polypeptide: uncharacterized protein (154 aa).

2 helical membrane passes run 54–74 (FLIT…IYLL) and 81–101 (FAFV…FFLS).

It is found in the cell membrane. This is an uncharacterized protein from Mycoplasma genitalium (strain ATCC 33530 / DSM 19775 / NCTC 10195 / G37) (Mycoplasmoides genitalium).